The following is a 338-amino-acid chain: 1-aminocyclopropane-1-carboxylate deaminase (338 aa).

Lys51 bears the N6-(pyridoxal phosphate)lysine mark. Residue Ser78 is the Nucleophile of the active site.

The protein belongs to the ACC deaminase/D-cysteine desulfhydrase family. Homotrimer. Requires pyridoxal 5'-phosphate as cofactor.

It catalyses the reaction 1-aminocyclopropane-1-carboxylate + H2O = 2-oxobutanoate + NH4(+). Functionally, catalyzes a cyclopropane ring-opening reaction, the irreversible conversion of 1-aminocyclopropane-1-carboxylate (ACC) to ammonia and alpha-ketobutyrate. Allows growth on ACC as a nitrogen source. This is 1-aminocyclopropane-1-carboxylate deaminase from Pseudomonas sp. (strain ACP).